An 843-amino-acid chain; its full sequence is Probable disease resistance protein At5g47250 (843 aa).

Residues methionine 28 to glutamate 58 are a coiled coil. The NB-ARC domain maps to threonine 141 to glycine 440. Glycine 183–threonine 190 serves as a coordination point for ATP. 5 LRR repeats span residues threonine 510–proline 531, asparagine 535–valine 556, threonine 559–leucine 581, serine 583–leucine 604, and lysine 606–glutamine 628.

Belongs to the disease resistance NB-LRR family.

Probable disease resistance protein. The polypeptide is Probable disease resistance protein At5g47250 (Arabidopsis thaliana (Mouse-ear cress)).